A 232-amino-acid chain; its full sequence is Octanoyltransferase (232 aa).

The region spanning 44–219 (EHTGDELWVV…QLARQFGLVL (176 aa)) is the BPL/LPL catalytic domain. Substrate is bound by residues 83–90 (RGGQVTYH), 150–152 (ALG), and 163–165 (GLS). C181 serves as the catalytic Acyl-thioester intermediate.

It belongs to the LipB family.

It is found in the cytoplasm. The catalysed reaction is octanoyl-[ACP] + L-lysyl-[protein] = N(6)-octanoyl-L-lysyl-[protein] + holo-[ACP] + H(+). The protein operates within protein modification; protein lipoylation via endogenous pathway; protein N(6)-(lipoyl)lysine from octanoyl-[acyl-carrier-protein]: step 1/2. Functionally, catalyzes the transfer of endogenously produced octanoic acid from octanoyl-acyl-carrier-protein onto the lipoyl domains of lipoate-dependent enzymes. Lipoyl-ACP can also act as a substrate although octanoyl-ACP is likely to be the physiological substrate. This Xanthomonas campestris pv. campestris (strain 8004) protein is Octanoyltransferase.